The chain runs to 669 residues: DNA ligase 2 (669 aa).

Residues 35-39 (DKEYD) and 83-84 (SL) contribute to the NAD(+) site. Lys125 serves as the catalytic N6-AMP-lysine intermediate. Positions 147, 181, and 317 each coordinate NAD(+). Zn(2+) is bound by residues Cys410, Cys413, Cys426, and Cys432. One can recognise a BRCT domain in the interval 590–669 (VVENAFTGKT…EEFEQLINNM (80 aa)).

This sequence belongs to the NAD-dependent DNA ligase family. LigA subfamily. The cofactor is Mg(2+). Mn(2+) serves as cofactor.

It catalyses the reaction NAD(+) + (deoxyribonucleotide)n-3'-hydroxyl + 5'-phospho-(deoxyribonucleotide)m = (deoxyribonucleotide)n+m + AMP + beta-nicotinamide D-nucleotide.. Its function is as follows. DNA ligase that catalyzes the formation of phosphodiester linkages between 5'-phosphoryl and 3'-hydroxyl groups in double-stranded DNA using NAD as a coenzyme and as the energy source for the reaction. It is essential for DNA replication and repair of damaged DNA. The protein is DNA ligase 2 of Clostridium acetobutylicum (strain ATCC 824 / DSM 792 / JCM 1419 / IAM 19013 / LMG 5710 / NBRC 13948 / NRRL B-527 / VKM B-1787 / 2291 / W).